The following is a 464-amino-acid chain: ATP synthase subunit beta (464 aa).

148–155 contacts ATP; the sequence is GGAGVGKT.

This sequence belongs to the ATPase alpha/beta chains family. As to quaternary structure, F-type ATPases have 2 components, CF(1) - the catalytic core - and CF(0) - the membrane proton channel. CF(1) has five subunits: alpha(3), beta(3), gamma(1), delta(1), epsilon(1). CF(0) has three main subunits: a(1), b(2) and c(9-12). The alpha and beta chains form an alternating ring which encloses part of the gamma chain. CF(1) is attached to CF(0) by a central stalk formed by the gamma and epsilon chains, while a peripheral stalk is formed by the delta and b chains.

It localises to the cell inner membrane. It carries out the reaction ATP + H2O + 4 H(+)(in) = ADP + phosphate + 5 H(+)(out). In terms of biological role, produces ATP from ADP in the presence of a proton gradient across the membrane. The catalytic sites are hosted primarily by the beta subunits. This is ATP synthase subunit beta from Marinobacter nauticus (strain ATCC 700491 / DSM 11845 / VT8) (Marinobacter aquaeolei).